The following is a 365-amino-acid chain: Mitogen-activated protein kinase HOG1 (365 aa).

Positions 20–306 (YSDLQPVGMG…ATNALAHEYL (287 aa)) constitute a Protein kinase domain. Residues 26–34 (VGMGAFGLV) and lysine 49 contribute to the ATP site. Aspartate 148 acts as the Proton acceptor in catalysis. The TXY motif lies at 178 to 180 (TGY).

Belongs to the protein kinase superfamily. Ser/Thr protein kinase family. MAP kinase subfamily. HOG1 sub-subfamily. Mg(2+) is required as a cofactor.

It localises to the cytoplasm. The protein localises to the nucleus. The catalysed reaction is L-seryl-[protein] + ATP = O-phospho-L-seryl-[protein] + ADP + H(+). The enzyme catalyses L-threonyl-[protein] + ATP = O-phospho-L-threonyl-[protein] + ADP + H(+). In terms of biological role, proline-directed serine/threonine-protein kinase involved in a signal transduction pathway that is activated by changes in the osmolarity of the extracellular environment. Controls osmotic regulation of transcription of target genes. Involved in environmental stress response, hyphal growth, conidiation and possibly secondary metabolism such as ustiloxin biosynthesis or the biosynthesis of other phytotoxic compounds that are inhibitory to rice shoot growth during seed germination. Plays a key role in responses to cell wall and membrane stresses but not oxidative stress. In Ustilaginoidea virens (Rice false smut fungus), this protein is Mitogen-activated protein kinase HOG1.